The chain runs to 157 residues: Lipoprotein signal peptidase (157 aa).

The next 4 membrane-spanning stretches (helical) occupy residues 10 to 30 (LVFM…KYAI), 38 to 58 (SLMV…LLSF), 59 to 79 (LEGG…IFLI), and 84 to 104 (LFKT…SNVL). Residues Asp-114 and Asp-131 contribute to the active site. The helical transmembrane segment at 122 to 142 (FDFAIFNFADVMIDVGVGVLL) threads the bilayer.

It belongs to the peptidase A8 family.

It localises to the cell inner membrane. The enzyme catalyses Release of signal peptides from bacterial membrane prolipoproteins. Hydrolyzes -Xaa-Yaa-Zaa-|-(S,diacylglyceryl)Cys-, in which Xaa is hydrophobic (preferably Leu), and Yaa (Ala or Ser) and Zaa (Gly or Ala) have small, neutral side chains.. Its pathway is protein modification; lipoprotein biosynthesis (signal peptide cleavage). Functionally, this protein specifically catalyzes the removal of signal peptides from prolipoproteins. The polypeptide is Lipoprotein signal peptidase (Helicobacter pylori (strain HPAG1)).